A 74-amino-acid chain; its full sequence is ATP synthase subunit c (74 aa).

Helical transmembrane passes span 8-28 (FIGAGLAAIGMIGSGIGVGNI) and 52-72 (IGFAVTEAIALFALVVALMVL).

This sequence belongs to the ATPase C chain family. As to quaternary structure, F-type ATPases have 2 components, F(1) - the catalytic core - and F(0) - the membrane proton channel. F(1) has five subunits: alpha(3), beta(3), gamma(1), delta(1), epsilon(1). F(0) has three main subunits: a(1), b(2) and c(10-14). The alpha and beta chains form an alternating ring which encloses part of the gamma chain. F(1) is attached to F(0) by a central stalk formed by the gamma and epsilon chains, while a peripheral stalk is formed by the delta and b chains.

It is found in the cell inner membrane. Its function is as follows. F(1)F(0) ATP synthase produces ATP from ADP in the presence of a proton or sodium gradient. F-type ATPases consist of two structural domains, F(1) containing the extramembraneous catalytic core and F(0) containing the membrane proton channel, linked together by a central stalk and a peripheral stalk. During catalysis, ATP synthesis in the catalytic domain of F(1) is coupled via a rotary mechanism of the central stalk subunits to proton translocation. Functionally, key component of the F(0) channel; it plays a direct role in translocation across the membrane. A homomeric c-ring of between 10-14 subunits forms the central stalk rotor element with the F(1) delta and epsilon subunits. The sequence is that of ATP synthase subunit c from Paramagnetospirillum magneticum (strain ATCC 700264 / AMB-1) (Magnetospirillum magneticum).